A 571-amino-acid chain; its full sequence is Potassium-transporting ATPase potassium-binding subunit (571 aa).

Transmembrane regions (helical) follow at residues 5–25 (LAAGLQVAFVLAVLAVAYVPV), 60–80 (YGYAGSVLGFSTASVLFLYAL), 86–106 (VLPLSGDLSGVSPAVAFNTAV), 131–151 (GLAVQNFVSAAVGMAVAVALI), 177–197 (ILLPFSFVIALILLSQGVIQS), 247–267 (PTPVSNIVEILAILLIPVSLT), 291–311 (LTLLAVMGILWGSLLAVTLAA), 334–354 (FGIPGTALFAVSTTGTSTGAV), 386–406 (GLYGILVLALIAVFVGGLLVG), 425–445 (ALSVLVMPALVLIGTGITVIL), 498–518 (ALGLCMLFGRFLPIIFVLALA), and 547–567 (GTVVLVAALTFFPALALGPIA).

It belongs to the KdpA family. The system is composed of three essential subunits: KdpA, KdpB and KdpC.

The protein resides in the cell membrane. Its function is as follows. Part of the high-affinity ATP-driven potassium transport (or Kdp) system, which catalyzes the hydrolysis of ATP coupled with the electrogenic transport of potassium into the cytoplasm. This subunit binds the extracellular potassium ions and delivers the ions to the membrane domain of KdpB through an intramembrane tunnel. The sequence is that of Potassium-transporting ATPase potassium-binding subunit from Rhodococcus jostii (strain RHA1).